The chain runs to 206 residues: Octanoyltransferase (206 aa).

The 177-residue stretch at 30–206 (PETNDEIWLV…EFVTLLNNSI (177 aa)) folds into the BPL/LPL catalytic domain. Substrate is bound by residues 69–76 (RGGQVTYH), 137–139 (SLG), and 150–152 (GIA). Cys168 functions as the Acyl-thioester intermediate in the catalytic mechanism.

This sequence belongs to the LipB family.

It localises to the cytoplasm. It carries out the reaction octanoyl-[ACP] + L-lysyl-[protein] = N(6)-octanoyl-L-lysyl-[protein] + holo-[ACP] + H(+). The protein operates within protein modification; protein lipoylation via endogenous pathway; protein N(6)-(lipoyl)lysine from octanoyl-[acyl-carrier-protein]: step 1/2. Catalyzes the transfer of endogenously produced octanoic acid from octanoyl-acyl-carrier-protein onto the lipoyl domains of lipoate-dependent enzymes. Lipoyl-ACP can also act as a substrate although octanoyl-ACP is likely to be the physiological substrate. The protein is Octanoyltransferase of Francisella tularensis subsp. novicida (strain U112).